The following is a 1185-amino-acid chain: Liprin-alpha-4 (1185 aa).

Coiled-coil stretches lie at residues Ala-24 to Ser-123 and Asp-165 to Gly-499. Disordered regions lie at residues Ser-638–Arg-709 and Glu-721–Ile-757. Ser-640 carries the post-translational modification Phosphoserine. Positions Gly-645–Ala-656 are enriched in polar residues. Ser-681 carries the phosphoserine modification. A compositionally biased stretch (basic and acidic residues) spans Ser-684–Ile-695. The span at Asp-729–Asp-742 shows a compositional bias: low complexity. 3 SAM domains span residues Trp-829–Leu-895, Asn-944–Leu-1008, and Trp-1032–Leu-1101.

This sequence belongs to the liprin family. Liprin-alpha subfamily. Forms homodimers and heterodimers with liprins-alpha and liprins-beta. Interacts with the second PTPase domain of PTPRD, PTPRF and PTPRS. Interacts with RIMS1 and RIMS2. Interacts with GIT1 and GIT2. Interacts with GRIP1. Interacts with KIF1A. Expressed only in the heart, brain, and skeletal muscle.

The protein resides in the cytoplasm. It is found in the cell surface. Functionally, may regulate the disassembly of focal adhesions. May localize receptor-like tyrosine phosphatases type 2A at specific sites on the plasma membrane, possibly regulating their interaction with the extracellular environment and their association with substrates. This chain is Liprin-alpha-4 (PPFIA4), found in Homo sapiens (Human).